We begin with the raw amino-acid sequence, 121 residues long: MARIAGVDIPNDKRVVISLTYVYGIGLATSKKILAAAGISEDVRVRDLTSDQEDAIRREVDAIKVEGDLRREVNLNIKRLMEIGSYRGIRHRRGLPVRGQNTKNNARTRKGKAVAIAGKKK.

Residues 96–121 are disordered; sequence PVRGQNTKNNARTRKGKAVAIAGKKK. Basic residues predominate over residues 106–121; that stretch reads ARTRKGKAVAIAGKKK.

The protein belongs to the universal ribosomal protein uS13 family. In terms of assembly, part of the 30S ribosomal subunit. Forms a loose heterodimer with protein S19. Forms two bridges to the 50S subunit in the 70S ribosome.

In terms of biological role, located at the top of the head of the 30S subunit, it contacts several helices of the 16S rRNA. In the 70S ribosome it contacts the 23S rRNA (bridge B1a) and protein L5 of the 50S subunit (bridge B1b), connecting the 2 subunits; these bridges are implicated in subunit movement. Contacts the tRNAs in the A and P-sites. This is Small ribosomal subunit protein uS13 from Streptococcus pneumoniae serotype 4 (strain ATCC BAA-334 / TIGR4).